Here is a 419-residue protein sequence, read N- to C-terminus: Serine hydroxymethyltransferase (419 aa).

(6S)-5,6,7,8-tetrahydrofolate-binding positions include Leu-121 and 125-127; that span reads GHL. Lys-230 is modified (N6-(pyridoxal phosphate)lysine). 354 to 356 contacts (6S)-5,6,7,8-tetrahydrofolate; the sequence is SPF.

This sequence belongs to the SHMT family. Homodimer. It depends on pyridoxal 5'-phosphate as a cofactor.

The protein resides in the cytoplasm. The enzyme catalyses (6R)-5,10-methylene-5,6,7,8-tetrahydrofolate + glycine + H2O = (6S)-5,6,7,8-tetrahydrofolate + L-serine. The protein operates within one-carbon metabolism; tetrahydrofolate interconversion. It functions in the pathway amino-acid biosynthesis; glycine biosynthesis; glycine from L-serine: step 1/1. Its function is as follows. Catalyzes the reversible interconversion of serine and glycine with tetrahydrofolate (THF) serving as the one-carbon carrier. This reaction serves as the major source of one-carbon groups required for the biosynthesis of purines, thymidylate, methionine, and other important biomolecules. Also exhibits THF-independent aldolase activity toward beta-hydroxyamino acids, producing glycine and aldehydes, via a retro-aldol mechanism. The chain is Serine hydroxymethyltransferase from Prochlorococcus marinus (strain SARG / CCMP1375 / SS120).